The primary structure comprises 176 residues: MTIHIPTWVNGTLQPVEKLEAHLRGLRHKAISVFILRDGDVLLQRRAMGKYHTPGLWANTCCTHPQWDEAGVDCAMRRLDEELGVKDVPLRYRDTVEYRADVGGGLIEHEVVDIFVGEMPSGMEPVMNPEEVMEVEWTPLATLAQRVEASPETFTPWLHIYLRKYADIIFESATDA.

The Mn(2+) site is built by histidine 22 and histidine 28. A Nudix hydrolase domain is found at 26-160 (LRHKAISVFI…PETFTPWLHI (135 aa)). Cysteine 62 is a catalytic residue. Histidine 64 serves as a coordination point for Mn(2+). Position 82 (glutamate 82) interacts with Mg(2+). Positions 108 and 110 each coordinate Mn(2+). Glutamate 110 is an active-site residue.

It belongs to the IPP isomerase type 1 family. Requires Mg(2+) as cofactor. It depends on Mn(2+) as a cofactor.

It localises to the cytoplasm. The catalysed reaction is isopentenyl diphosphate = dimethylallyl diphosphate. Its pathway is isoprenoid biosynthesis; dimethylallyl diphosphate biosynthesis; dimethylallyl diphosphate from isopentenyl diphosphate: step 1/1. It functions in the pathway porphyrin-containing compound metabolism; chlorophyll biosynthesis. Catalyzes the 1,3-allylic rearrangement of the homoallylic substrate isopentenyl (IPP) to its highly electrophilic allylic isomer, dimethylallyl diphosphate (DMAPP). This chain is Isopentenyl-diphosphate Delta-isomerase, found in Jannaschia sp. (strain CCS1).